The primary structure comprises 953 residues: MSLNRFLFTSFSFFLFFIVHFASSATLPTQEGEAFKVVLTTLKKTNIDLNVDPCEVSSTGNEWSTISRNLKRENLQGSLPKELVGLPLLQEIDLSRNYLNGSIPPEWGVLPLVNIWLLGNRLTGPIPKEFGNITTLTSLVLEANQLSGELPLELGNLPNIQQMILSSNNFNGEIPSTFAKLTTLRDFRVSDNQLSGTIPDFIQKWTKLERLFIQASGLVGPIPIAIASLVELKDLRISDLNGPESPFPQLRNIKKMETLILRNCNLTGDLPDYLGKITSFKFLDLSFNKLSGAIPNTYINLRDGGYIYFTGNMLNGSVPDWMVNKGYKIDLSYNNFSVDPTNAVCKYNNVLSCMRNYQCPKTFNALHINCGGDEMSINGTIYESDKYDRLESWYESRNGWFSNNVGVFVDDKHVPERVTIESNSSELNVVDFGLYTQARISAISLTYYALCLENGNYNVNLHFAEIMFNGNNNYQSLGRRFFDIYIQRKLEVKDFNIAKEAKDVGNVVIKTFPVEIKDGKLEIRLYWAGRGTTVIPKERVYGPLISAISVDSSVNPSPRNGMSTGTLHTLVVILSIFIVFLVFGTLWKKGYLRSKSQMEKDFKSLELMIASFSLRQIKIATNNFDSANRIGEGGFGPVYKGKLFDGTIIAVKQLSTGSKQGNREFLNEIGMISALHHPNLVKLYGCCVEGGQLLLVYEFVENNSLARALFGPQETQLRLDWPTRRKICIGVARGLAYLHEESRLKIVHRDIKATNVLLDKQLNPKISDFGLAKLDEEDSTHISTRIAGTFGYMAPEYAMRGHLTDKADVYSFGIVALEIVHGRSNKIERSKNNTFYLIDWVEVLREKNNLLELVDPRLGSEYNREEAMTMIQIAIMCTSSEPCERPSMSEVVKMLEGKKMVEVEKLEEASVHRETKRLENMNTMKKYYEMIGQEISTSMSMIMSDRSESSADH.

Positions 1–22 (MSLNRFLFTSFSFFLFFIVHFA) are cleaved as a signal peptide. The Extracellular portion of the chain corresponds to 23 to 566 (SSATLPTQEG…SPRNGMSTGT (544 aa)). LRR repeat units follow at residues 63–86 (WSTI…LVGL), 88–110 (LLQE…WGVL), 111–132 (PLVN…EFGN), 135–158 (TLTS…GNLP), 159–182 (NIQQ…AKLT), and 183–205 (TLRD…IQKW). Asn100 and Asn132 each carry an N-linked (GlcNAc...) asparagine glycan. N-linked (GlcNAc...) asparagine glycans are attached at residues Asn265, Asn315, Asn335, Asn378, and Asn423. Residues 567 to 587 (LHTLVVILSIFIVFLVFGTLW) traverse the membrane as a helical segment. The Cytoplasmic portion of the chain corresponds to 588 to 953 (KKGYLRSKSQ…SDRSESSADH (366 aa)). Residues 624–901 (FDSANRIGEG…VKMLEGKKMV (278 aa)) form the Protein kinase domain. ATP contacts are provided by residues 630-638 (IGEGGFGPV) and Lys652. Tyr697 is subject to Phosphotyrosine. Asp750 acts as the Proton acceptor in catalysis. The residue at position 783 (Ser783) is a Phosphoserine. Residues Thr784 and Thr789 each carry the phosphothreonine modification. Tyr797 bears the Phosphotyrosine mark.

The protein belongs to the protein kinase superfamily. Ser/Thr protein kinase family.

The protein localises to the membrane. It catalyses the reaction L-seryl-[protein] + ATP = O-phospho-L-seryl-[protein] + ADP + H(+). It carries out the reaction L-threonyl-[protein] + ATP = O-phospho-L-threonyl-[protein] + ADP + H(+). This Arabidopsis thaliana (Mouse-ear cress) protein is Probable LRR receptor-like serine/threonine-protein kinase At1g53420.